Here is a 439-residue protein sequence, read N- to C-terminus: GTPase Der (439 aa).

EngA-type G domains lie at 4-168 (PIVA…KDDE) and 177-352 (INIA…DNYT). GTP-binding positions include 10 to 17 (GRPNVGKS), 57 to 61 (DTGGI), 120 to 123 (NKID), 183 to 190 (GKPNVGKS), 230 to 234 (DTAGL), and 295 to 298 (NKWD). The KH-like domain maps to 353 to 437 (KRVKTGVLND…GIKLEFRERK (85 aa)).

This sequence belongs to the TRAFAC class TrmE-Era-EngA-EngB-Septin-like GTPase superfamily. EngA (Der) GTPase family. In terms of assembly, associates with the 50S ribosomal subunit.

GTPase that plays an essential role in the late steps of ribosome biogenesis. The chain is GTPase Der from Clostridium botulinum (strain Langeland / NCTC 10281 / Type F).